A 117-amino-acid polypeptide reads, in one-letter code: UPF0295 protein YgzB (117 aa).

Transmembrane regions (helical) follow at residues 13 to 33 (TFAL…IFFK) and 41 to 61 (LFMI…FWIG).

Belongs to the UPF0295 family.

It is found in the cell membrane. The chain is UPF0295 protein YgzB (ygzB) from Bacillus subtilis (strain 168).